We begin with the raw amino-acid sequence, 506 residues long: Ribose import ATP-binding protein RbsA 2 (506 aa).

2 ABC transporter domains span residues 6–241 and 254–499; these read LSMT…VGRV and EKSN…SITI. An ATP-binding site is contributed by 38–45; sequence GENGAGKS.

It belongs to the ABC transporter superfamily. Ribose importer (TC 3.A.1.2.1) family. In terms of assembly, the complex is composed of an ATP-binding protein (RbsA), two transmembrane proteins (RbsC) and a solute-binding protein (RbsB).

It is found in the cell inner membrane. It carries out the reaction D-ribose(out) + ATP + H2O = D-ribose(in) + ADP + phosphate + H(+). Functionally, part of the ABC transporter complex RbsABC involved in ribose import. Responsible for energy coupling to the transport system. This is Ribose import ATP-binding protein RbsA 2 from Agrobacterium fabrum (strain C58 / ATCC 33970) (Agrobacterium tumefaciens (strain C58)).